The chain runs to 396 residues: S-adenosylmethionine synthase 3 (396 aa).

E13 lines the Mg(2+) pocket. H19 lines the ATP pocket. A K(+)-binding site is contributed by E47. L-methionine-binding residues include E60 and Q103. ATP-binding positions include D171–K173, S239–F242, D250, R256–K257, A273, K277, and K281. D250 lines the L-methionine pocket. K281 provides a ligand contact to L-methionine.

The protein belongs to the AdoMet synthase family. Homotetramer. Mn(2+) is required as a cofactor. The cofactor is Mg(2+). It depends on Co(2+) as a cofactor. K(+) serves as cofactor. As to expression, expressed in roots, stems and leaves (at protein level).

It is found in the cytoplasm. It catalyses the reaction L-methionine + ATP + H2O = S-adenosyl-L-methionine + phosphate + diphosphate. It participates in amino-acid biosynthesis; S-adenosyl-L-methionine biosynthesis; S-adenosyl-L-methionine from L-methionine: step 1/1. Functionally, catalyzes the formation of S-adenosylmethionine from methionine and ATP. The reaction comprises two steps that are both catalyzed by the same enzyme: formation of S-adenosylmethionine (AdoMet) and triphosphate, and subsequent hydrolysis of the triphosphate. May be involved in the synthesis of betain in response to abiotic stress such as high salinity. This Atriplex nummularia (Old man saltbush) protein is S-adenosylmethionine synthase 3 (SAMS3).